The sequence spans 451 residues: MALNVIKISRVSLVTNSVEPLVLPLTFFDLLWLKLNPIERVTFYKLTESSRDSFFSSILPKLEQSLSLVLSHFLPLSGHLKWNPQDPKPHIVIFPKDTVSLTVVESEADFSYISSKELRLETELRPLVPELQVSSDSASLLSLQITLFPNQGFSIGTTVHHVVMDGKTASKFHKSWAHICKHGTTPQDFDLPTVLDRTVINVPAGLEQKIFQLSSYISEEKDYARTLTLPPAKEIDNDVVRVTLELTEVDIEKLKERAKNESTRSDLHLSTFVVSYAYVLTCMVKSCGGDANRPVRFMYAADFRNRLDPPVPLTYFGNCVLPIDFNGYKATTFLGKDGYVNGVEILSDSVRGLGSRNIESIWEVYEDGTKNMKLDTQNVTVTGSNQFGIYGSDFGWGRPVKTDVMSLYKNNEFSMSARRDEIGGLEIGISLKKCEMNVFLSLFTSDFDIYK.

Residues histidine 161 and aspartate 393 each act as proton acceptor in the active site.

Belongs to the plant acyltransferase family.

This chain is BAHD acyltransferase At3g29680, found in Arabidopsis thaliana (Mouse-ear cress).